The primary structure comprises 562 residues: Arginine--tRNA ligase (562 aa).

Residues 122–132 carry the 'HIGH' region motif; it reads PNIAKPISMGH.

It belongs to the class-I aminoacyl-tRNA synthetase family. As to quaternary structure, monomer.

It is found in the cytoplasm. The enzyme catalyses tRNA(Arg) + L-arginine + ATP = L-arginyl-tRNA(Arg) + AMP + diphosphate. This Pediococcus pentosaceus (strain ATCC 25745 / CCUG 21536 / LMG 10740 / 183-1w) protein is Arginine--tRNA ligase.